A 162-amino-acid chain; its full sequence is NADH-quinone oxidoreductase subunit I (162 aa).

4Fe-4S ferredoxin-type domains are found at residues 54–83 and 93–122; these read RRYE…IESE and TRYD…ETQI. The [4Fe-4S] cluster site is built by C63, C66, C69, C73, C102, C105, C108, and C112.

Belongs to the complex I 23 kDa subunit family. NDH-1 is composed of 14 different subunits. Subunits NuoA, H, J, K, L, M, N constitute the membrane sector of the complex. Requires [4Fe-4S] cluster as cofactor.

It is found in the cell inner membrane. It catalyses the reaction a quinone + NADH + 5 H(+)(in) = a quinol + NAD(+) + 4 H(+)(out). NDH-1 shuttles electrons from NADH, via FMN and iron-sulfur (Fe-S) centers, to quinones in the respiratory chain. The immediate electron acceptor for the enzyme in this species is believed to be ubiquinone. Couples the redox reaction to proton translocation (for every two electrons transferred, four hydrogen ions are translocated across the cytoplasmic membrane), and thus conserves the redox energy in a proton gradient. This is NADH-quinone oxidoreductase subunit I from Burkholderia ambifaria (strain MC40-6).